A 523-amino-acid chain; its full sequence is ATP synthase subunit alpha (523 aa).

179 to 186 (GDRQTGKT) lines the ATP pocket.

This sequence belongs to the ATPase alpha/beta chains family. F-type ATPases have 2 components, CF(1) - the catalytic core - and CF(0) - the membrane proton channel. CF(1) has five subunits: alpha(3), beta(3), gamma(1), delta(1), epsilon(1). CF(0) has three main subunits: a(1), b(2) and c(9-12). The alpha and beta chains form an alternating ring which encloses part of the gamma chain. CF(1) is attached to CF(0) by a central stalk formed by the gamma and epsilon chains, while a peripheral stalk is formed by the delta and b chains.

It is found in the cell inner membrane. The enzyme catalyses ATP + H2O + 4 H(+)(in) = ADP + phosphate + 5 H(+)(out). Produces ATP from ADP in the presence of a proton gradient across the membrane. The alpha chain is a regulatory subunit. The sequence is that of ATP synthase subunit alpha from Vibrio parahaemolyticus serotype O3:K6 (strain RIMD 2210633).